A 418-amino-acid chain; its full sequence is Serine hydroxymethyltransferase (418 aa).

Residues L120 and 124 to 126 (GHL) each bind (6S)-5,6,7,8-tetrahydrofolate. N6-(pyridoxal phosphate)lysine is present on K229.

Belongs to the SHMT family. As to quaternary structure, homodimer. Pyridoxal 5'-phosphate is required as a cofactor.

It localises to the cytoplasm. The enzyme catalyses (6R)-5,10-methylene-5,6,7,8-tetrahydrofolate + glycine + H2O = (6S)-5,6,7,8-tetrahydrofolate + L-serine. Its pathway is one-carbon metabolism; tetrahydrofolate interconversion. The protein operates within amino-acid biosynthesis; glycine biosynthesis; glycine from L-serine: step 1/1. Its function is as follows. Catalyzes the reversible interconversion of serine and glycine with tetrahydrofolate (THF) serving as the one-carbon carrier. This reaction serves as the major source of one-carbon groups required for the biosynthesis of purines, thymidylate, methionine, and other important biomolecules. Also exhibits THF-independent aldolase activity toward beta-hydroxyamino acids, producing glycine and aldehydes, via a retro-aldol mechanism. In Myxococcus xanthus (strain DK1622), this protein is Serine hydroxymethyltransferase.